The following is a 1232-amino-acid chain: DNA-directed RNA polymerase subunit beta (1232 aa).

A disordered region spans residues 1170-1232; that stretch reads SVDEDADELE…LDLDDFGDEH (63 aa). Positions 1171–1180 are enriched in acidic residues; that stretch reads VDEDADELEV. The span at 1189–1198 shows a compositional bias: basic and acidic residues; the sequence is PEEKEEKEKE. Positions 1199-1232 are enriched in acidic residues; that stretch reads DSDEYDDLREEDVEPDLEELSLDDLDLDDFGDEH.

It belongs to the RNA polymerase beta chain family. The RNAP catalytic core consists of 2 alpha, 1 beta, 1 beta' and 1 omega subunit. When a sigma factor is associated with the core the holoenzyme is formed, which can initiate transcription.

It carries out the reaction RNA(n) + a ribonucleoside 5'-triphosphate = RNA(n+1) + diphosphate. DNA-dependent RNA polymerase catalyzes the transcription of DNA into RNA using the four ribonucleoside triphosphates as substrates. This Clostridium botulinum (strain Hall / ATCC 3502 / NCTC 13319 / Type A) protein is DNA-directed RNA polymerase subunit beta.